Here is a 229-residue protein sequence, read N- to C-terminus: Uracil-DNA glycosylase (229 aa).

Asp64 (proton acceptor) is an active-site residue.

It belongs to the uracil-DNA glycosylase (UDG) superfamily. UNG family.

The protein resides in the cytoplasm. It carries out the reaction Hydrolyzes single-stranded DNA or mismatched double-stranded DNA and polynucleotides, releasing free uracil.. In terms of biological role, excises uracil residues from the DNA which can arise as a result of misincorporation of dUMP residues by DNA polymerase or due to deamination of cytosine. In Geobacillus kaustophilus (strain HTA426), this protein is Uracil-DNA glycosylase.